The following is a 131-amino-acid chain: Small ribosomal subunit protein uS8 (131 aa).

The protein belongs to the universal ribosomal protein uS8 family. As to quaternary structure, part of the 30S ribosomal subunit. Contacts proteins S5 and S12.

In terms of biological role, one of the primary rRNA binding proteins, it binds directly to 16S rRNA central domain where it helps coordinate assembly of the platform of the 30S subunit. In Ralstonia nicotianae (strain ATCC BAA-1114 / GMI1000) (Ralstonia solanacearum), this protein is Small ribosomal subunit protein uS8.